The primary structure comprises 313 residues: MTDLSFPGQAASPGEGAGQTPSGGSGHRFDTRRHWAASLSLGFRDRDGRTRMTRARHHGPLRVQRPFYPETGHVPDARYAEPCHVYLLHPPGGLVSGDELRIDIEAESGAHALLTTPAATKLYRADSHGVCWGQHTHLSVRPGALLEWLPQETLCFDGARGMQSTTLDVQGDGCCVGWEVLALGRPASQLPFVSGRVEQRFALTRDGRPLWRERQPLDPMHPRFHGYWGQGGSTVQATLWAVGLTAPQAAVEALRECLPASRHWAVTQRRDVLLLRYLGDERNAAWEICQQAWEVLRPWLSSRQASVPRIWMT.

Positions methionine 1–aspartate 30 are disordered. The span at glutamate 15–glycine 26 shows a compositional bias: gly residues.

It belongs to the UreD family. As to quaternary structure, ureD, UreF and UreG form a complex that acts as a GTP-hydrolysis-dependent molecular chaperone, activating the urease apoprotein by helping to assemble the nickel containing metallocenter of UreC. The UreE protein probably delivers the nickel.

The protein resides in the cytoplasm. In terms of biological role, required for maturation of urease via the functional incorporation of the urease nickel metallocenter. The protein is Urease accessory protein UreD of Chromohalobacter salexigens (strain ATCC BAA-138 / DSM 3043 / CIP 106854 / NCIMB 13768 / 1H11).